The primary structure comprises 321 residues: tRNA pseudouridine synthase B (321 aa).

Catalysis depends on D47, which acts as the Nucleophile.

Belongs to the pseudouridine synthase TruB family. Type 1 subfamily.

The enzyme catalyses uridine(55) in tRNA = pseudouridine(55) in tRNA. In terms of biological role, responsible for synthesis of pseudouridine from uracil-55 in the psi GC loop of transfer RNAs. The sequence is that of tRNA pseudouridine synthase B from Shewanella baltica (strain OS223).